Reading from the N-terminus, the 86-residue chain is Mu-theraphotoxin-Cg2a 2 (86 aa).

Positions 1 to 21 are cleaved as a signal peptide; sequence MKVSVVITLAVLGVMFVWASA. A propeptide spanning residues 22 to 50 is cleaved from the precursor; it reads AELEERGSDQRDSPAWIKSMERIFQSEER. Cystine bridges form between cysteine 52/cysteine 66, cysteine 59/cysteine 71, and cysteine 65/cysteine 78. Phenylalanine 84 is modified (phenylalanine amide).

This sequence belongs to the neurotoxin 10 (Hwtx-1) family. 37 (Jztx-31) subfamily. As to expression, expressed by the venom gland.

The protein localises to the secreted. Its function is as follows. Inhibits both peak current and fast inactivation of voltage-gated sodium channels (Nav) channels. Inhibits the inactivation of Nav on DRG neurons (EC(50)=1.77 uM) and peak current of cardiac myocytes (IC(50)=0.90 uM). This chain is Mu-theraphotoxin-Cg2a 2, found in Chilobrachys guangxiensis (Chinese earth tiger tarantula).